Reading from the N-terminus, the 504-residue chain is MFGDRQRPMVLVLGLGESGLAIARWCARHGCRLRVADTRETPPNLAALTAAGVDFEFVGGAFSPALVDGGIELVALSPGLSPLAEDLAPLVAAARERGIPVWGELEFFAQALAALGANGYAPKVIAITGTNGKTTTTSLAGLLCERAGKKVAVAGNISPAMLDKLTEAIDAAALPDVWVLELSSFQLDTAHTFAPDAATILNITQDHLDWHGGFAAYAAAKGRVFGPRTVRVLNRDDAEVMRFAPPAAAADAPRAVTFGLNEPAADGDYGLLRENGIAWLVEAIDRDGADAPAAPSRRRKQEAANPPDIALKRLMPADALRIRGLHNAANALAAYALARAIGLPAAPLLHGLREYRGEPHRVEVIATLDGVDYVDDSKGTNVGATVAALDGLAQRAVLIAGGDGKGQDFEPLAAPVARWCRAVMLIGRDAPALREALADTGVPLADHATLEAAVRAASALAQPGDAVLLSPACASLDMFRNYAHRADVFRSAVEDIALEKGTTL.

129 to 135 contributes to the ATP binding site; the sequence is GTNGKTT.

This sequence belongs to the MurCDEF family.

The protein localises to the cytoplasm. The catalysed reaction is UDP-N-acetyl-alpha-D-muramoyl-L-alanine + D-glutamate + ATP = UDP-N-acetyl-alpha-D-muramoyl-L-alanyl-D-glutamate + ADP + phosphate + H(+). It functions in the pathway cell wall biogenesis; peptidoglycan biosynthesis. Its function is as follows. Cell wall formation. Catalyzes the addition of glutamate to the nucleotide precursor UDP-N-acetylmuramoyl-L-alanine (UMA). This Burkholderia mallei (strain NCTC 10247) protein is UDP-N-acetylmuramoylalanine--D-glutamate ligase.